Here is a 246-residue protein sequence, read N- to C-terminus: TVP38/TMEM64 family membrane protein MT0653 (246 aa).

Transmembrane regions (helical) follow at residues 19 to 39, 57 to 77, 83 to 103, 157 to 177, and 196 to 216; these read LVVF…TDVI, LTYV…PILA, LFGP…TAVV, AFGT…IGSA, and LLAS…AFAA.

Belongs to the TVP38/TMEM64 family.

It localises to the cell membrane. The chain is TVP38/TMEM64 family membrane protein MT0653 from Mycobacterium tuberculosis (strain CDC 1551 / Oshkosh).